Reading from the N-terminus, the 225-residue chain is Probable septum site-determining protein MinC (225 aa).

This sequence belongs to the MinC family. Interacts with MinD and FtsZ.

In terms of biological role, cell division inhibitor that blocks the formation of polar Z ring septums. Rapidly oscillates between the poles of the cell to destabilize FtsZ filaments that have formed before they mature into polar Z rings. Prevents FtsZ polymerization. In Listeria monocytogenes serotype 4a (strain HCC23), this protein is Probable septum site-determining protein MinC.